A 106-amino-acid chain; its full sequence is uncharacterized protein (106 aa).

This is an uncharacterized protein from Haemophilus influenzae (strain ATCC 51907 / DSM 11121 / KW20 / Rd).